Here is an 882-residue protein sequence, read N- to C-terminus: Translation initiation factor IF-2 (882 aa).

2 disordered regions span residues 67–202 and 223–278; these read KTVS…EKAR and ERYG…KHMK. 2 stretches are compositionally biased toward basic and acidic residues: residues 95-152 and 161-202; these read VKRD…EAKA and EQPK…EKAR. Positions 251 to 264 are enriched in basic residues; it reads GRRNRNKTQTKSKR. A compositionally biased stretch (basic and acidic residues) spans 265 to 274; sequence GGKDAREGRE. One can recognise a tr-type G domain in the interval 382 to 551; the sequence is PRAPVVTIMG…LLQAEVLELK (170 aa). Positions 391 to 398 are G1; that stretch reads GHVDHGKT. 391-398 contacts GTP; sequence GHVDHGKT. The interval 416–420 is G2; the sequence is GITQH. Residues 437-440 are G3; that stretch reads DTPG. GTP is bound by residues 437–441 and 491–494; these read DTPGH and NKMD. The tract at residues 491-494 is G4; sequence NKMD. Positions 527–529 are G5; that stretch reads SAK.

It belongs to the TRAFAC class translation factor GTPase superfamily. Classic translation factor GTPase family. IF-2 subfamily.

The protein localises to the cytoplasm. Its function is as follows. One of the essential components for the initiation of protein synthesis. Protects formylmethionyl-tRNA from spontaneous hydrolysis and promotes its binding to the 30S ribosomal subunits. Also involved in the hydrolysis of GTP during the formation of the 70S ribosomal complex. The chain is Translation initiation factor IF-2 from Shewanella amazonensis (strain ATCC BAA-1098 / SB2B).